The sequence spans 94 residues: Pyrimidine/purine nucleoside phosphorylase (94 aa).

The protein belongs to the nucleoside phosphorylase PpnP family.

It carries out the reaction a purine D-ribonucleoside + phosphate = a purine nucleobase + alpha-D-ribose 1-phosphate. It catalyses the reaction adenosine + phosphate = alpha-D-ribose 1-phosphate + adenine. The catalysed reaction is cytidine + phosphate = cytosine + alpha-D-ribose 1-phosphate. The enzyme catalyses guanosine + phosphate = alpha-D-ribose 1-phosphate + guanine. It carries out the reaction inosine + phosphate = alpha-D-ribose 1-phosphate + hypoxanthine. It catalyses the reaction thymidine + phosphate = 2-deoxy-alpha-D-ribose 1-phosphate + thymine. The catalysed reaction is uridine + phosphate = alpha-D-ribose 1-phosphate + uracil. The enzyme catalyses xanthosine + phosphate = alpha-D-ribose 1-phosphate + xanthine. Catalyzes the phosphorolysis of diverse nucleosides, yielding D-ribose 1-phosphate and the respective free bases. Can use uridine, adenosine, guanosine, cytidine, thymidine, inosine and xanthosine as substrates. Also catalyzes the reverse reactions. The sequence is that of Pyrimidine/purine nucleoside phosphorylase from Escherichia coli (strain ATCC 8739 / DSM 1576 / NBRC 3972 / NCIMB 8545 / WDCM 00012 / Crooks).